Reading from the N-terminus, the 227-residue chain is UPF0758 protein lpp2553 (227 aa).

Residues 102-225 (RLSNTQQTYA…YSIFAENKWV (124 aa)) enclose the MPN domain. Residues histidine 173, histidine 175, and aspartate 186 each contribute to the Zn(2+) site. The JAMM motif signature appears at 173–186 (HNHPSGLSDASQQD).

The protein belongs to the UPF0758 family.

The protein is UPF0758 protein lpp2553 of Legionella pneumophila (strain Paris).